Here is a 184-residue protein sequence, read N- to C-terminus: Ribosome-recycling factor (184 aa).

A disordered region spans residues 141 to 164 (DEKNGDITEDDLRSQTEDVQKATD).

The protein belongs to the RRF family.

The protein localises to the cytoplasm. In terms of biological role, responsible for the release of ribosomes from messenger RNA at the termination of protein biosynthesis. May increase the efficiency of translation by recycling ribosomes from one round of translation to another. This is Ribosome-recycling factor from Staphylococcus haemolyticus (strain JCSC1435).